Here is a 202-residue protein sequence, read N- to C-terminus: ATP-dependent Clp protease proteolytic subunit (202 aa).

Residue Ser-106 is the Nucleophile of the active site. His-131 is a catalytic residue.

The protein belongs to the peptidase S14 family. As to quaternary structure, fourteen ClpP subunits assemble into 2 heptameric rings which stack back to back to give a disk-like structure with a central cavity, resembling the structure of eukaryotic proteasomes.

It is found in the cytoplasm. It carries out the reaction Hydrolysis of proteins to small peptides in the presence of ATP and magnesium. alpha-casein is the usual test substrate. In the absence of ATP, only oligopeptides shorter than five residues are hydrolyzed (such as succinyl-Leu-Tyr-|-NHMec, and Leu-Tyr-Leu-|-Tyr-Trp, in which cleavage of the -Tyr-|-Leu- and -Tyr-|-Trp bonds also occurs).. Functionally, cleaves peptides in various proteins in a process that requires ATP hydrolysis. Has a chymotrypsin-like activity. Plays a major role in the degradation of misfolded proteins. The protein is ATP-dependent Clp protease proteolytic subunit of Verminephrobacter eiseniae (strain EF01-2).